A 285-amino-acid polypeptide reads, in one-letter code: UPF0354 protein SH1179 (285 aa).

The protein belongs to the UPF0354 family.

This chain is UPF0354 protein SH1179, found in Staphylococcus haemolyticus (strain JCSC1435).